A 129-amino-acid chain; its full sequence is Prefoldin subunit 6 (129 aa).

An N-acetylalanine modification is found at Ala2. N6-acetyllysine is present on Lys21. An N6-acetyllysine; alternate modification is found at Lys66. Lys66 participates in a covalent cross-link: Glycyl lysine isopeptide (Lys-Gly) (interchain with G-Cter in SUMO1); alternate. A Glycyl lysine isopeptide (Lys-Gly) (interchain with G-Cter in SUMO2); alternate cross-link involves residue Lys66.

This sequence belongs to the prefoldin subunit beta family. In terms of assembly, heterohexamer of two PFD-alpha type and four PFD-beta type subunits. Component of the PAQosome complex which is responsible for the biogenesis of several protein complexes and which consists of R2TP complex members RUVBL1, RUVBL2, RPAP3 and PIH1D1, URI complex members PFDN2, PFDN6, PDRG1, UXT and URI1 as well as ASDURF, POLR2E and DNAAF10/WDR92.

Its function is as follows. Binds specifically to cytosolic chaperonin (c-CPN) and transfers target proteins to it. Binds to nascent polypeptide chain and promotes folding in an environment in which there are many competing pathways for nonnative proteins. In Canis lupus familiaris (Dog), this protein is Prefoldin subunit 6 (PFDN6).